A 210-amino-acid polypeptide reads, in one-letter code: High mobility group protein B2 (210 aa).

Lys-3 carries the post-translational modification N6-acetyllysine. Residues 9-79 constitute a DNA-binding region (HMG box 1); it reads PRGKMSSYAF…RYDREMKNYV (71 aa). Cys-23 carries the post-translational modification Cysteine sulfonic acid (-SO3H); alternate. The cysteines at positions 23 and 45 are disulfide-linked. Lys-30 bears the N6-acetyllysine mark. Ser-35 is modified (phosphoserine). The residue at position 43 (Lys-43) is an N6-acetyllysine. Cys-45 bears the Cysteine sulfonic acid (-SO3H); alternate mark. The segment covering 51 to 76 has biased composition (basic and acidic residues); the sequence is TMSAKEKSKFEDLAKSDKARYDREMK. The disordered stretch occupies residues 51-102; that stretch reads TMSAKEKSKFEDLAKSDKARYDREMKNYVPPKGDKKGKKKDPNAPKRPPSAF. Position 90 is an N6-acetyllysine (Lys-90). Residues 95-163 constitute a DNA-binding region (HMG box 2); sequence PKRPPSAFFL…KYEKDIAAYR (69 aa). Ser-100 carries the phosphoserine modification. Cysteine sulfonic acid (-SO3H) is present on Cys-106. N6-acetyllysine occurs at positions 114 and 141. Basic and acidic residues predominate over residues 162–172; sequence YRAKGKSEVGK. Positions 162–210 are disordered; it reads YRAKGKSEVGKKGPGRPTGSKKKNEPEDEEEEEEEEDDEDEEEEDEDEE. Residues 165-180 form a required for chemotactic activity region; it reads KGKSEVGKKGPGRPTG. Acidic residues predominate over residues 187–210; that stretch reads PEDEEEEEEEEDDEDEEEEDEDEE.

The protein belongs to the HMGB family. In terms of assembly, interacts with POU2F2, POU2F1 and POU3F1. Component of the RAG complex composed of core components RAG1 and RAG2, and associated component HMGB1 or HMGB2. Component of the SET complex, composed of at least ANP32A, APEX1, HMGB2, NME1, SET and TREX1. Directly interacts with SET. Interacts with LEF1. Post-translationally, reduction/oxidation of cysteine residues Cys-23, Cys-45 and Cys-106 and a possible intramolecular disulfide bond involving Cys-23 and Cys-45 give rise to different redox forms with specific functional activities in various cellular compartments: 1- fully reduced HMGB2 (HMGB2C23hC45hC106h), 2- disulfide HMGB2 (HMGB2C23-C45C106h) and 3- sulfonyl HMGB2 (HMGB2C23soC45soC106so).

Its subcellular location is the nucleus. The protein resides in the chromosome. It localises to the cytoplasm. It is found in the secreted. In terms of biological role, multifunctional protein with various roles in different cellular compartments. May act in a redox sensitive manner. In the nucleus is an abundant chromatin-associated non-histone protein involved in transcription, chromatin remodeling and V(D)J recombination and probably other processes. Binds DNA with a preference to non-canonical DNA structures such as single-stranded DNA. Can bent DNA and enhance DNA flexibility by looping thus providing a mechanism to promote activities on various gene promoters by enhancing transcription factor binding and/or bringing distant regulatory sequences into close proximity. Involved in V(D)J recombination by acting as a cofactor of the RAG complex: acts by stimulating cleavage and RAG protein binding at the 23 bp spacer of conserved recombination signal sequences (RSS). Proposed to be involved in the innate immune response to nucleic acids by acting as a cytoplasmic promiscuous immunogenic DNA/RNA sensor which cooperates with subsequent discriminative sensing by specific pattern recognition receptors. In the extracellular compartment acts as a chemokine. Promotes proliferation and migration of endothelial cells implicating AGER/RAGE. Has antimicrobial activity in gastrointestinal epithelial tissues. Involved in inflammatory response to antigenic stimulus coupled with pro-inflammatory activity. May play a role in germ cell differentiation. Involved in modulation of neurogenesis probably by regulation of neural stem proliferation. Involved in articular cartilage surface maintenance implicating LEF1 and the Wnt/beta-catenin pathway. The protein is High mobility group protein B2 (Hmgb2) of Rattus norvegicus (Rat).